Here is a 216-residue protein sequence, read N- to C-terminus: Pyrophosphatase PpaX (216 aa).

Residue aspartate 9 is the Nucleophile of the active site.

This sequence belongs to the HAD-like hydrolase superfamily. PpaX family. Mg(2+) is required as a cofactor.

The catalysed reaction is diphosphate + H2O = 2 phosphate + H(+). In terms of biological role, hydrolyzes pyrophosphate formed during P-Ser-HPr dephosphorylation by HPrK/P. Might play a role in controlling the intracellular pyrophosphate pool. In Bacillus thuringiensis (strain Al Hakam), this protein is Pyrophosphatase PpaX.